The sequence spans 543 residues: Myotubularin-related protein 9-like (543 aa).

Positions 124 to 502 (AWHFHPPECY…QSLRLWQGLF (379 aa)) constitute a Myotubularin phosphatase domain.

Belongs to the protein-tyrosine phosphatase family. Non-receptor class myotubularin subfamily.

Its function is as follows. Probable pseudophosphatase. This Bos taurus (Bovine) protein is Myotubularin-related protein 9-like.